The primary structure comprises 172 residues: Gamma-crystallin-4 (172 aa).

Beta/gamma crystallin 'Greek key' domains follow at residues 1–37 (IFFY…RVES) and 38–80 (GNWI…RFIP). The tract at residues 81 to 85 (HPHSQ) is connecting peptide. 2 consecutive Beta/gamma crystallin 'Greek key' domains span residues 86-126 (YKMR…NVSD) and 127-169 (GHWM…RRVH).

The protein belongs to the beta/gamma-crystallin family. Monomer.

Functionally, crystallins are the dominant structural components of the vertebrate eye lens. The protein is Gamma-crystallin-4 (cryg4) of Xenopus laevis (African clawed frog).